Consider the following 5376-residue polypeptide: Zonadhesin (5376 aa).

Residues 1 to 17 (MALPVWTLMLLVGAAWG) form the signal peptide. Topologically, residues 18–5310 (QEQVPAWRPN…TTRKKIEASS (5293 aa)) are extracellular. MAM domains lie at 45–210 (SKCD…TCNQ), 215–374 (QMCT…PCGE), and 377–542 (PQCD…PCRV). N-linked (GlcNAc...) asparagine glycosylation is found at Asn339 and Asn499. The tract at residues 547-1170 (EIPSSPLLPP…PTTGVSTTES (624 aa)) is 80 X heptapeptide repeats (approximate) (mucin-like domain). 2 disordered regions span residues 553-579 (LLPP…TKAT) and 1037-1113 (TVPP…TVST). The span at 1052–1113 (TEVTTTPPEE…IASEETTVST (62 aa)) shows a compositional bias: low complexity. Residues 1171-1220 (CPPNAHIELCACPASCESPKPSCQPPCIPGCVCNPGFLFSNNQCINESSC) form the TIL 1 domain. N-linked (GlcNAc...) asparagine glycans are attached at residues Asn1216, Asn1239, and Asn1314. Residues 1227–1275 (KHYKPGEEWFTPNCTERCRCLPGSLMECQISQCGTHTVCQLKSDQYQCE) form the VWFC 1 domain. The 183-residue stretch at 1280–1462 (ATCLVYGDLH…DKDWVSSRCQ (183 aa)) folds into the VWFD 1 domain. 2 cysteine pairs are disulfide-bonded: Cys1282–Cys1417 and Cys1304–Cys1461. The TIL 2 domain maps to 1555-1608 (CPKNSRYSLCAKPCPETCHPISTTQHCSDKCVEGCECDPGFILSGSECVPSSQC). The VWFC 2 domain occupies 1609-1664 (GCTSFQGRYFKLQEQWFNPDCKEICTCESHNHILCKPWKCKAQEACSYKNGVLGCH). The 181-residue stretch at 1669–1849 (ATCMVSGDPH…ILEASDPGCF (181 aa)) folds into the VWFD 2 domain. 2 disulfide bridges follow: Cys1671–Cys1809 and Cys1693–Cys1848. N-linked (GlcNAc...) asparagine glycans are attached at residues Asn1814, Asn1908, and Asn1933. The TIL 3 domain maps to 1941-1995 (CPPRSSYNPCANSCPATCLTLSTPRDCPTLPCVEGCECQSGHILSGTTCVPLRQC). The 57-residue stretch at 1996-2052 (GCSDQDGSYHLLGESWYTEKTCTTLCTCSAHSNITCSPTACKANHVCLRQEGLLRCA) folds into the VWFC 3 domain. N-linked (GlcNAc...) asparagine glycans are attached at residues Asn2028, Asn2111, Asn2142, and Asn2332. In terms of domain architecture, VWFD 3 spans 2056 to 2239 (GECRISEDSQ…KDKSMDPNCQ (184 aa)). Intrachain disulfides connect Cys2058-Cys2200 and Cys2080-Cys2238. The 59-residue stretch at 2340–2398 (CPAHSHYTNCLPSCPPSCLDPDSRCEGSGHKVPATCREGCICQPDYVLLNDKCVLRSHC) folds into the TIL 4 domain. The VWFC 4 domain occupies 2399 to 2454 (GCKDAQGVFIPAGKTWISEDCTQSCTCMKGSMRCWDFQCPPGTYCKNSNDGSSNCV). The region spanning 2460–2518 (CPAHSKFTDCLPPCHPSCSDPDGHCEGISTNAHSNCKEGCVCQPGYVLRNDKCVLRIEC) is the TIL 5 domain. A VWFC 5 domain is found at 2519–2574 (GCQHTQGGFIPAGKNWTSRGCSQSCDCMEGVIRCQNFQCPSGTYCQDIEDGTSNCA). N-linked (GlcNAc...) asparagine glycans are attached at residues Asn2533 and Asn2575. A TIL 6 domain is found at 2580–2638 (CPAHSSFTNCLPPCQPSCSDPEGHCGGSTTKAPSACQEGCVCEPDYVVLNNKCVPRIEC). The VWFC 6 domain occupies 2639–2694 (GCKDAQGVLIPADKIWINKGCTQTCACVTGTIHCRDFQCPSGTYCKDIKDDASNCT). A glycan (N-linked (GlcNAc...) asparagine) is linked at Asn2692. The TIL 7 domain maps to 2700-2758 (CPDHSLYTHCLPSCLLSCSDPDGLCRGTSPEAPSTCKEGCVCDPDYVLSNDKCVLRIEC). One can recognise a VWFC 7 domain in the interval 2759-2814 (GCKDAQGVLIPAGKTWINRGCTQSCSCMGGAIQCQNFKCPSEAYCQDMEDGNSNCT). Asn2812 carries an N-linked (GlcNAc...) asparagine glycan. Residues 2820-2878 (CPAHSHYTNCLPTCQPSCSDPDGHCEGSSTKAPSACKEGCVCEPDYVMLNNKCVPRIEC) enclose the TIL 8 domain. The VWFC 8 domain maps to 2879–2934 (GCKDTQGVLIPADKTWINRGCTQSCTCRGGAIQCQKYHCSSGTYCKDMEDDSSSCA). The region spanning 2940–2998 (CPAHSHFTNCLPPCQPSCLDSEGHCEGSTTKAPSACQEGCVCEPDYVVLNNKCVPRIEC) is the TIL 9 domain. The region spanning 2999–3054 (GCKDAQGVLIPADKTWINRGCTQSCTCKGGAIQCQKFQCPSETYCKDIEDGNSNCT) is the VWFC 9 domain. N-linked (GlcNAc...) asparagine glycosylation is found at Asn3052, Asn3065, Asn3144, and Asn3172. One can recognise a TIL 10 domain in the interval 3060 to 3118 (CPANSNFTSCLPSCQPSCSNTDVHCEGSSPNTLSSCREGCVCQSGYVLHNDKCILRNQC). Residues 3119–3174 (GCKDAQGALIPEGKTWITSGCTQSCNCTGGAIQCQNFQCPLKTYCKDLKDGSSNCT) enclose the VWFC 10 domain. Residues 3180–3238 (CPAHSRYTNCLPSCPPLCLDPEGLCEGTSPKVPSTCREGCICQPGYLMHKNKCVLRIFC) form the TIL 11 domain. The VWFC 11 domain maps to 3239-3294 (GCKNTQGAFISADKTWISRGCTQSCTCPAGAIHCRNFKCPSGTYCKNGDNGSSNCT). 2 N-linked (GlcNAc...) asparagine glycosylation sites follow: Asn3288 and Asn3292. A TIL 12 domain is found at 3300–3355 (CPTNSQFTDCLPSCVPSCSNRCEVTSPSVPSSCREGCLCNHGFVFSEDKCVPRTQC). A VWFC 12 domain is found at 3356–3411 (GCKDARGAIIPAGKTWTSKGCTQSCACVEGNIQCQNFQCPPETYCKDNSEGSSTCT). Positions 3417–3475 (CPAHTQYTSCLPSCLPSCLDPEGLCKDISPKVPSTCKEGCVCQSGYVLNSDKCVLRAEC) constitute a TIL 13 domain. A VWFC 13 domain is found at 3476 to 3531 (DCKDAQGALIPAGKTWTSPGCTQSCACMGGAVQCQSSQCPPGTYCKDNEDGNSNCA). Positions 3537 to 3595 (CPAHSLFTNCLPPCLPSCLDPDGLCKGASPKVPSTCKEGCICQSGYVLSNNKCLLRNRC) constitute a TIL 14 domain. The region spanning 3596–3651 (GCKDAHGALIPEDKTWVSRGCTQSCVCTGGSIQCLSSQCPPGAYCKDNEDGSSNCA) is the VWFC 14 domain. One can recognise a TIL 15 domain in the interval 3657-3715 (CPANSHYTDCFPPCPPSCSDPEGHCEASGPRVLSTCREGCLCNPGFVLDRDKCVPRVEC). The VWFC 15 domain occupies 3716–3771 (GCKDAQGALIPSGKTWTSPGCTQSCACMGGVVQCQSSQCPPGTYCKDNEDGNSNCA). A TIL 16 domain is found at 3777–3835 (CPTHSNYTDCLPFCLPSCLDPSALCGGTSPKGPSTCKEGCVCQPGYVLDKDKCILKIEC). Asn3782 carries an N-linked (GlcNAc...) asparagine glycan. The region spanning 3836–3891 (GCRDTQGAVIPAGKTWLSTGCIQSCACVEGTIQCQNFQCPPGTYCNHNNNCAKIPL) is the VWFC 16 domain. A TIL 17 domain is found at 3893-3951 (CPAHSHFTSCLPSCPPSCANLDGSCEQTSPKVPSTCKEGCLCQPGYFLNNGKCVLQTHC). The 56-residue stretch at 3952 to 4007 (DCKDAEGGLVPAGKTWTSKDCTQSCACTGGAVQCQNFQCPLGTYCKDSGDGSSNCT) folds into the VWFC 17 domain. An N-linked (GlcNAc...) asparagine glycan is attached at Asn4005. Residues 4029-4087 (CPAHSHFTSCLPSCPPSCSNLDGSCVESNFKAPSVCKKGCICQPGYLLNNDKCVLRIQC) form the TIL 18 domain. A VWFC 18 domain is found at 4088–4143 (GCKDTQGGLIPAGRTWISSDCTKSCSCMGGIIQCRDFQCPPGTYCKESNDSSRTCA). N-linked (GlcNAc...) asparagine glycosylation occurs at Asn4136. In terms of domain architecture, TIL 19 spans 4149-4207 (CPAHSHYTNCLPACSRSCTDLDGHCEGTSPKVPSPCKEGCLCQPGYVVHNHKCVLQIHC). The VWFC 19 domain maps to 4208-4262 (GCKDAQGGFVPAGKTWISRGCTQSCACVGGAVQCHNFTCPTGTQCQNSSCSKITV). Asn4243 and Asn4254 each carry an N-linked (GlcNAc...) asparagine glycan. In terms of domain architecture, TIL 20 spans 4264 to 4322 (CPAHSQYTTCLPSCLPSCFDPEGLCGGASPRAPSTCREGCVCEADYVLREDKCVLRTQC). In terms of domain architecture, VWFC 20 spans 4323 to 4378 (GCKDAQGDLIPANKTWLTRGCAQKCTCKGGNIHCWNFKCPLGTECKDSVDGGSNCT). N-linked (GlcNAc...) asparagine glycosylation is found at Asn4335 and Asn4376. The region spanning 4384-4442 (CPAHSHHTYCLPSCIPSCSNVNDRCESTSLQRPSTCIEGCLCHSGFVFSKDKCVPRTQC) is the TIL 21 domain. Residues 4443 to 4498 (GCKDSQGTLIPAGKNWITTGCSQRCTCTGGLVQCHDFQCPSGAECQDIEDGNSNCV) form the VWFC 21 domain. The TIL 22 domain maps to 4504 to 4562 (CPAHSHYSKCLPPCQPSCSDPDGHCEGTSPEAPSTCEEGCVCEPDYVLSNDKCVPSSEC). The region spanning 4563 to 4618 (GCKDAHGVLIPESKTWVSRGCTKNCTCKGGTVQCHDFSCPTGSRCLDNNEGNSNCV) is the VWFC 22 domain. N-linked (GlcNAc...) asparagine glycosylation occurs at Asn4586. Residues 4624 to 4682 (CPAHSLYTNCLPSCLPSCSDPEGLCGGTSPEVPSTCKEGCICQSGYVLHKNKCMLRIHC) enclose the TIL 23 domain. The 56-residue stretch at 4683 to 4738 (DCKDFQGSLIKTGQTWISSGCSKICTCKGGFFQCQSYKCPSGTQCEESEDGSSNCV) folds into the VWFC 23 domain. The TIL 24 domain occupies 4744-4802 (CPANSLYTHCLPTCLPSCSNPDGRCEGTSHKAPSTCREGCVCQPGYLLNKDTCVHKNQC). The VWFC 24 domain occupies 4803–4858 (GCKDIRGNIIPAGNTWISSDCTQSCACTDGVIQCQNFVCPSGSHCQYNEDGSSDCA). In terms of domain architecture, VWFD 4 spans 4863-5038 (ERCTIFGDPY…SWEVKAQHAF (176 aa)). The cysteines at positions 4865 and 5001 are disulfide-linked. Asn5136 carries an N-linked (GlcNAc...) asparagine glycan. Residues 5150–5203 (CPANTVYQRCMTPCPASCAKFVTPKVCEGPCVEGCASLPGYIYSDTQSLPVTHC) form the TIL 25 domain. The region spanning 5204–5258 (GCTADGIYYKLGDSFVTNDCSQHCTCASQGILLCEPYGCRAGESCMVANFTRGCF) is the VWFC 25 domain. N-linked (GlcNAc...) asparagine glycosylation occurs at Asn5252. An EGF-like domain is found at 5259-5295 (QDSPCLQNPCHNDGRCEEQGATFICHCDFGYGGEFCT). Intrachain disulfides connect Cys5263/Cys5274, Cys5268/Cys5283, and Cys5285/Cys5294. Residues 5311 to 5337 (LVAILPGVLVMVLVPVLLPRVYVYMAT) form a helical membrane-spanning segment. Residues 5338 to 5376 (RTTMGRRRMKRKEKKLLRQSRLRLEDADVPEPTFKATEF) are Cytoplasmic-facing.

Probably forms covalent oligomers. As to expression, in testis, primarily in haploid spermatids.

It is found in the cell membrane. In terms of biological role, binds in a species-specific manner to the zona pellucida of the egg. May be involved in gamete recognition and/or signaling. The sequence is that of Zonadhesin (Zan) from Mus musculus (Mouse).